The chain runs to 396 residues: NDP-glycosyltransferase YjiC (396 aa).

Residues Asn-18, Thr-234, Val-283, His-298, and 302 to 306 (NSTME) each bind UDP.

It belongs to the UDP-glycosyltransferase family.

The catalysed reaction is an NDP-glycose + an acceptor = a glycosylated acceptor + NDP.. Functionally, glycosyltransferase that can glycosylate a wide range of substrates, including various flavonoids (flavones, flavonols, flavanones, flavanols, chalcones), isoflavonoids and stilbenes, to produce multiple glycosylated products. It can accept diverse nucleotide diphosphate-D/L-sugars as donors, including ADP-, GDP-, CDP-, TDP- or UDP-alpha-D-glucose, and catalyzes O-, N-, or S-glycosylation. In vitro, catalyzes the glycosylation of, among others, apigenin, 3-hydroxyflavone, phloretin or resveratrol, resulting in multiple glucosylated products, along with mono-, di-, tri- and tetraglucosides. Can also catalyze the glycosylation of the macrolide epothilone A with diverse NDP-D/L-sugars, forming different epothilone A glycoside derivatives. The protein is NDP-glycosyltransferase YjiC of Bacillus licheniformis (strain ATCC 14580 / DSM 13 / JCM 2505 / CCUG 7422 / NBRC 12200 / NCIMB 9375 / NCTC 10341 / NRRL NRS-1264 / Gibson 46).